A 204-amino-acid chain; its full sequence is Protein-L-isoaspartate O-methyltransferase (204 aa).

Belongs to the methyltransferase superfamily. L-isoaspartyl/D-aspartyl protein methyltransferase family. In terms of assembly, monomer.

The protein resides in the cytoplasm. The enzyme catalyses [protein]-L-isoaspartate + S-adenosyl-L-methionine = [protein]-L-isoaspartate alpha-methyl ester + S-adenosyl-L-homocysteine. Functionally, catalyzes the methyl esterification of L-isoaspartyl residues in peptides and proteins that result from spontaneous decomposition of normal L-aspartyl and L-asparaginyl residues. It plays a role in the repair and/or degradation of damaged proteins. The polypeptide is Protein-L-isoaspartate O-methyltransferase (pcm) (Rhizobium meliloti (strain 1021) (Ensifer meliloti)).